The primary structure comprises 145 residues: MFFFDFLFFFFVCFYMCFVCCVTICLPIELTIVSLLVRGNHFLRFYWCGLERCIACRLCDLICPSLALDVRVGWSFGGHRFADWFTLSYRRCIYCGFCMHVCPTDAITHSLFVMCFCCLAMYLLAPKFLLFGCCFMLFDFYLCFV.

4Fe-4S ferredoxin-type domains lie at Leu-43–Gly-73 and Asp-83–Phe-112. 8 residues coordinate [4Fe-4S] cluster: Cys-53, Cys-56, Cys-59, Cys-63, Cys-92, Cys-95, Cys-98, and Cys-102.

Belongs to the complex I 23 kDa subunit family. [4Fe-4S] cluster is required as a cofactor.

The protein resides in the mitochondrion. The enzyme catalyses a ubiquinone + NADH + 5 H(+)(in) = a ubiquinol + NAD(+) + 4 H(+)(out). Functionally, core subunit of the mitochondrial membrane respiratory chain NADH dehydrogenase (Complex I) that is believed to belong to the minimal assembly required for catalysis. Complex I functions in the transfer of electrons from NADH to the respiratory chain. The immediate electron acceptor for the enzyme is believed to be ubiquinone. May donate electrons to ubiquinone. In Trypanosoma brucei brucei, this protein is NADH-ubiquinone oxidoreductase subunit 8 (M-ISP1).